Reading from the N-terminus, the 101-residue chain is ATP-dependent Clp protease adapter protein ClpS (101 aa).

This sequence belongs to the ClpS family. In terms of assembly, binds to the N-terminal domain of the chaperone ClpA.

Its function is as follows. Involved in the modulation of the specificity of the ClpAP-mediated ATP-dependent protein degradation. This Mycobacterium bovis (strain ATCC BAA-935 / AF2122/97) protein is ATP-dependent Clp protease adapter protein ClpS.